The sequence spans 155 residues: Small ribosomal subunit protein uS7 (155 aa).

It belongs to the universal ribosomal protein uS7 family. Part of the 30S ribosomal subunit. Contacts proteins S9 and S11.

In terms of biological role, one of the primary rRNA binding proteins, it binds directly to 16S rRNA where it nucleates assembly of the head domain of the 30S subunit. Is located at the subunit interface close to the decoding center, probably blocks exit of the E-site tRNA. In Petrotoga mobilis (strain DSM 10674 / SJ95), this protein is Small ribosomal subunit protein uS7.